A 289-amino-acid polypeptide reads, in one-letter code: NAD(P)H-hydrate epimerase (289 aa).

Residues 71 to 277 (AQTIDNELMS…SIVEKYNLKV (207 aa)) form the YjeF N-terminal domain. 122 to 126 (NNGGD) provides a ligand contact to (6S)-NADPHX. Residues asparagine 123 and aspartate 185 each coordinate K(+). (6S)-NADPHX contacts are provided by residues 189–195 (GFSFTGE) and aspartate 218. K(+) is bound at residue serine 221.

The protein belongs to the NnrE/AIBP family. Requires K(+) as cofactor.

The enzyme catalyses (6R)-NADHX = (6S)-NADHX. The catalysed reaction is (6R)-NADPHX = (6S)-NADPHX. Functionally, catalyzes the epimerization of the S- and R-forms of NAD(P)HX, a damaged form of NAD(P)H that is a result of enzymatic or heat-dependent hydration. This is a prerequisite for the S-specific NAD(P)H-hydrate dehydratase to allow the repair of both epimers of NAD(P)HX. The chain is NAD(P)H-hydrate epimerase from Plasmodium vivax (strain Salvador I).